We begin with the raw amino-acid sequence, 170 residues long: J domain-containing protein (170 aa).

In terms of domain architecture, J spans 17–82; the sequence is DYYALLGCDE…SKRALYDKWR (66 aa). A disordered region spans residues 101–170; the sequence is QQSMHWSKPN…VISKFRNYEI (70 aa). The span at 110-120 shows a compositional bias: basic and acidic residues; it reads NTKDRMLEGEP. Composition is skewed to low complexity over residues 121-135 and 142-153; these read GKPS…SNPG and GGAALWGRWGAG.

The protein is J domain-containing protein (jdp) of Manduca sexta (Tobacco hawkmoth).